Consider the following 784-residue polypeptide: Protein Skeletor, isoforms B/C (784 aa).

The N-terminal stretch at 1–28 (MLAMKDKPWLLLFGLLAALSCLASFGDA) is a signal peptide. DM13 domains are found at residues 34 to 143 (GTKI…VSIP) and 151 to 258 (PQKI…VRLP). The 133-residue stretch at 287 to 419 (LAFEVRWAVA…GAESVVWAIG (133 aa)) folds into the DOMON domain. Residues 451-491 (PLPEGARGNSNSSEQEDSAPAAQSSTGGAGYPPAGRPNVEP) are disordered.

In terms of assembly, interacts with Chro and Mgtor as part of a macromolecular complex forming the spindle matrix. Chro colocalizes with Skeletor (Skel) on the chromosomes at interphase and on spindle during metaphase.

It is found in the cytoplasm. The protein resides in the cytoskeleton. Its subcellular location is the spindle. It localises to the nucleus. The protein localises to the nucleolus. It is found in the chromosome. Provides structural support to stabilize and organize the microtubule spindle during mitosis (within embryonic somatic cells) and meiosis (within spermatocytes). The role in mitosis regulation depends on the Ran pathway. The chain is Protein Skeletor, isoforms B/C from Drosophila melanogaster (Fruit fly).